Consider the following 369-residue polypeptide: Protein-glutamate methylesterase/protein-glutamine glutaminase 1 (369 aa).

A Response regulatory domain is found at 11–128 (RVLIVDDSAA…DLERQEASIR (118 aa)). Asp-62 bears the 4-aspartylphosphate mark. The segment at 136-168 (ATETTRRRSQPEPRPLAPGPKLTADEILPARPP) is disordered. The 189-residue stretch at 170 to 358 (PVPETMPVVC…LDRLAARIME (189 aa)) folds into the CheB-type methylesterase domain. Active-site residues include Ser-183, His-209, and Asp-305.

It belongs to the CheB family. Phosphorylated by CheA. Phosphorylation of the N-terminal regulatory domain activates the methylesterase activity.

It localises to the cytoplasm. It catalyses the reaction [protein]-L-glutamate 5-O-methyl ester + H2O = L-glutamyl-[protein] + methanol + H(+). The catalysed reaction is L-glutaminyl-[protein] + H2O = L-glutamyl-[protein] + NH4(+). Functionally, involved in chemotaxis. Part of a chemotaxis signal transduction system that modulates chemotaxis in response to various stimuli. Catalyzes the demethylation of specific methylglutamate residues introduced into the chemoreceptors (methyl-accepting chemotaxis proteins or MCP) by CheR. Also mediates the irreversible deamidation of specific glutamine residues to glutamic acid. This Cereibacter sphaeroides (strain ATCC 17023 / DSM 158 / JCM 6121 / CCUG 31486 / LMG 2827 / NBRC 12203 / NCIMB 8253 / ATH 2.4.1.) (Rhodobacter sphaeroides) protein is Protein-glutamate methylesterase/protein-glutamine glutaminase 1.